A 633-amino-acid chain; its full sequence is MSSCGACTCGAAAARLLTTSLTSAQRGISCGRIHVPVLGRLGTLDTQILRRAPLRTFSETPAYFASKDGTNKDGSGDGNKKSVTEGSSKKSGSGNSGKGGNQLRCPKCGDLCTHVETFVSSTRFVKCEKCHHFFVVLSEADSKKSIIKEPESAAEAVKLAFQQKPPPPPKKIYNYLDKYVVGQSFAKKVLSVAVYNHYKRIYNNIPANLRQQAEVEKQTSLTPRELEIRRREDEYRFTKLLQIAGISPHGNALGASMQQQGSQQMPQEKRGGEVLDSPHDDIKLEKSNILLLGPTGSGKTLLAQTLAKCLDVPFAICDCTTLTQAGYVGEDIESVIAKLLQDANYNVEKAQQGIVFLDEVDKIGSVPGIHQLRDVGGEGVQQGLLKLLEGTIVNVPEKNSRKLRGETVQVDTTNILFVASGAFNGLDRIISRRKNEKYLGFGTPSNLGKGRRAAAAADLANRSGESNTHQDIEEKDRLLRHVEARDLIEFGMIPEFVGRLPVVVPLHSLDEKTLVQILTEPRNAVIPQYQALFSMDKCELNVTEDALKAIARLALERKTGARGLRSIMEKLLLEPMFEVPNSDIVCVEVDKEVVEGKKEPGYIRAPSKESSEEDYDSGVEEDGWPRQADAANS.

A mitochondrion-targeting transit peptide spans 1–56; sequence MSSCGACTCGAAAARLLTTSLTSAQRGISCGRIHVPVLGRLGTLDTQILRRAPLRT. Residues 65–101 form a disordered region; that stretch reads ASKDGTNKDGSGDGNKKSVTEGSSKKSGSGNSGKGGN. Basic and acidic residues predominate over residues 69-83; it reads GTNKDGSGDGNKKSV. Positions 84–93 are enriched in low complexity; sequence TEGSSKKSGS. The 54-residue stretch at 93–146 folds into the ClpX-type ZB domain; that stretch reads SGNSGKGGNQLRCPKCGDLCTHVETFVSSTRFVKCEKCHHFFVVLSEADSKKSI. 4 residues coordinate Zn(2+): cysteine 105, cysteine 108, cysteine 127, and cysteine 130. Residue 294–301 coordinates ATP; it reads PTGSGKTL. Lysine 437 carries the N6-acetyllysine modification. Residues 598–610 are compositionally biased toward basic and acidic residues; that stretch reads KEPGYIRAPSKES. Residues 598-633 are disordered; sequence KEPGYIRAPSKESSEEDYDSGVEEDGWPRQADAANS. The span at 611-622 shows a compositional bias: acidic residues; the sequence is SEEDYDSGVEED. The residue at position 617 (serine 617) is a Phosphoserine.

Belongs to the ClpX chaperone family. Homohexamer that forms a ring structure; this hexamerization requires ATP binding. Component of the ClpXP complex formed by the assembly of two CLPP heptameric rings with two CLPX hexameric rings, giving rise to a symmetrical structure with two central CLPP rings flanked by a CLPX ring at either end of the complex. Interacts with TFAM.

The protein localises to the mitochondrion. The protein resides in the mitochondrion matrix. It is found in the mitochondrion nucleoid. It catalyses the reaction ATP + H2O = ADP + phosphate + H(+). ATP-dependent chaperone that functions as an unfoldase. As part of the ClpXP protease complex, it recognizes specific protein substrates, unfolds them using energy derived from ATP hydrolysis, and then translocates them to the proteolytic subunit (CLPP) of the ClpXP complex for degradation. Thanks to its chaperone activity, it also functions in the incorporation of the pyridoxal phosphate cofactor into 5-aminolevulinate synthase, thereby activating 5-aminolevulinate (ALA) synthesis, the first step in heme biosynthesis. This chaperone is also involved in the control of mtDNA nucleoid distribution, by regulating mitochondrial transcription factor A (TFAM) activity. This chain is ATP-dependent clpX-like chaperone, mitochondrial, found in Rattus norvegicus (Rat).